The sequence spans 386 residues: Bifunctional enzyme IspD/IspF (386 aa).

The tract at residues 1 to 225 (MYNFVTLSIL…SCLSAPSSDT (225 aa)) is 2-C-methyl-D-erythritol 4-phosphate cytidylyltransferase. Residues 226-386 (LSGVGFDVHA…NLKYFDWTKI (161 aa)) are 2-C-methyl-D-erythritol 2,4-cyclodiphosphate synthase. Positions 232 and 234 each coordinate a divalent metal cation. 4-CDP-2-C-methyl-D-erythritol 2-phosphate contacts are provided by residues 232–234 (DVH) and 258–259 (HS). Residue H266 coordinates a divalent metal cation. Residues 280–282 (DIG), 285–289 (FPDND), 356–359 (TTTE), F363, and R366 contribute to the 4-CDP-2-C-methyl-D-erythritol 2-phosphate site.

The protein in the N-terminal section; belongs to the IspD/TarI cytidylyltransferase family. IspD subfamily. In the C-terminal section; belongs to the IspF family. The cofactor is a divalent metal cation.

The enzyme catalyses 2-C-methyl-D-erythritol 4-phosphate + CTP + H(+) = 4-CDP-2-C-methyl-D-erythritol + diphosphate. It carries out the reaction 4-CDP-2-C-methyl-D-erythritol 2-phosphate = 2-C-methyl-D-erythritol 2,4-cyclic diphosphate + CMP. It functions in the pathway isoprenoid biosynthesis; isopentenyl diphosphate biosynthesis via DXP pathway; isopentenyl diphosphate from 1-deoxy-D-xylulose 5-phosphate: step 2/6. It participates in isoprenoid biosynthesis; isopentenyl diphosphate biosynthesis via DXP pathway; isopentenyl diphosphate from 1-deoxy-D-xylulose 5-phosphate: step 4/6. In terms of biological role, bifunctional enzyme that catalyzes the formation of 4-diphosphocytidyl-2-C-methyl-D-erythritol from CTP and 2-C-methyl-D-erythritol 4-phosphate (MEP) (IspD), and catalyzes the conversion of 4-diphosphocytidyl-2-C-methyl-D-erythritol 2-phosphate (CDP-ME2P) to 2-C-methyl-D-erythritol 2,4-cyclodiphosphate (ME-CPP) with a corresponding release of cytidine 5-monophosphate (CMP) (IspF). The protein is Bifunctional enzyme IspD/IspF of Sulfurimonas denitrificans (strain ATCC 33889 / DSM 1251) (Thiomicrospira denitrificans (strain ATCC 33889 / DSM 1251)).